The sequence spans 282 residues: Bifunctional protein FolD (282 aa).

Residues 165 to 167, serine 190, and isoleucine 231 contribute to the NADP(+) site; that span reads NRS.

The protein belongs to the tetrahydrofolate dehydrogenase/cyclohydrolase family. In terms of assembly, homodimer.

It carries out the reaction (6R)-5,10-methylene-5,6,7,8-tetrahydrofolate + NADP(+) = (6R)-5,10-methenyltetrahydrofolate + NADPH. It catalyses the reaction (6R)-5,10-methenyltetrahydrofolate + H2O = (6R)-10-formyltetrahydrofolate + H(+). Its pathway is one-carbon metabolism; tetrahydrofolate interconversion. Catalyzes the oxidation of 5,10-methylenetetrahydrofolate to 5,10-methenyltetrahydrofolate and then the hydrolysis of 5,10-methenyltetrahydrofolate to 10-formyltetrahydrofolate. This Clostridium botulinum (strain Langeland / NCTC 10281 / Type F) protein is Bifunctional protein FolD.